Consider the following 637-residue polypeptide: ATP-dependent zinc metalloprotease FtsH (637 aa).

Topologically, residues 1–44 (MAKHSQHSSPPRKLFDTLNDLWQRAKSEAGLSAEGPEGTRRRNN) are cytoplasmic. Residues 45–65 (LILYLLLVLSTLYLLNGYQTL) traverse the membrane as a helical segment. Over 66-141 (RNEEIPYSEF…TVRYGSNWFS (76 aa)) the chain is Periplasmic. The helical transmembrane segment at 142 to 162 (SLIFNWIVPIVLLTLFWTWMA) threads the bilayer. Residues 163–637 (RRMTGGRGFL…VKAVIREAAS (475 aa)) are Cytoplasmic-facing. Residue 231 to 238 (GPPGTGKT) coordinates ATP. Zn(2+) is bound at residue H454. The active site involves E455. The Zn(2+) site is built by H458 and D531.

The protein in the central section; belongs to the AAA ATPase family. It in the C-terminal section; belongs to the peptidase M41 family. As to quaternary structure, homohexamer. Zn(2+) is required as a cofactor.

The protein localises to the cell inner membrane. Acts as a processive, ATP-dependent zinc metallopeptidase for both cytoplasmic and membrane proteins. Plays a role in the quality control of integral membrane proteins. This is ATP-dependent zinc metalloprotease FtsH from Methylococcus capsulatus (strain ATCC 33009 / NCIMB 11132 / Bath).